Consider the following 269-residue polypeptide: MLEEINYDTKLFGLIGKNIKYTLSPYIHNFSFTTLGINAVYLVFDLDEMKFNRIINGLLEIAEGLNVTIPYKEEVMKYLDNTDTYSTRIQAVNTIYKKSGYNTDYLAIKNLVRKKIGNMSGYECYVYGAGGAAKAAAFALSELGCSSISIVNRTNLRANELVELLNKNGYNASIKENCNSTSNIVVVNSTPNPSVVPENCIQKSELVIEFVYKPVETELIKNAKKYGIKYIDGLEILVNQAVEAEKIWFNKSVSDEKIIEYLYARKLVW.

Shikimate-binding positions include 22-24 and Thr68; that span reads TLS. Lys72 acts as the Proton acceptor in catalysis. Asn93 and Asp104 together coordinate shikimate. NADP(+) is bound by residues 128 to 132, 152 to 157, and Phe210; these read GAGGA and NRTNLR. A shikimate-binding site is contributed by Tyr212. NADP(+) is bound at residue Gly233.

Belongs to the shikimate dehydrogenase family. As to quaternary structure, homodimer.

It carries out the reaction shikimate + NADP(+) = 3-dehydroshikimate + NADPH + H(+). It participates in metabolic intermediate biosynthesis; chorismate biosynthesis; chorismate from D-erythrose 4-phosphate and phosphoenolpyruvate: step 4/7. Its function is as follows. Involved in the biosynthesis of the chorismate, which leads to the biosynthesis of aromatic amino acids. Catalyzes the reversible NADPH linked reduction of 3-dehydroshikimate (DHSA) to yield shikimate (SA). The sequence is that of Shikimate dehydrogenase (NADP(+)) from Saccharolobus islandicus (strain L.S.2.15 / Lassen #1) (Sulfolobus islandicus).